Here is a 241-residue protein sequence, read N- to C-terminus: Large ribosomal subunit protein uL2 (241 aa).

The segment covering 1–12 (MGKRLISQRRGR) has biased composition (basic residues). Disordered stretches follow at residues 1–21 (MGKRLISQRRGRGTPTYRSAS) and 200–241 (AVDH…GKRR).

The protein belongs to the universal ribosomal protein uL2 family. Part of the 50S ribosomal subunit. Forms a bridge to the 30S subunit in the 70S ribosome.

Its function is as follows. One of the primary rRNA binding proteins. Required for association of the 30S and 50S subunits to form the 70S ribosome, for tRNA binding and peptide bond formation. It has been suggested to have peptidyltransferase activity; this is somewhat controversial. Makes several contacts with the 16S rRNA in the 70S ribosome. This is Large ribosomal subunit protein uL2 from Methanothermobacter thermautotrophicus (strain ATCC 29096 / DSM 1053 / JCM 10044 / NBRC 100330 / Delta H) (Methanobacterium thermoautotrophicum).